The primary structure comprises 160 residues: Nascent polypeptide-associated complex subunit alpha (160 aa).

Residues 10–75 (TKGEKKTREA…HSFDDIASRL (66 aa)) form the NAC-A/B domain. Residues 120 to 159 (VNPKDVEVVMKETKASREKVVETLIATKNDLVSAVLELTT) form the UBA domain.

It belongs to the NAC-alpha family. Part of the nascent polypeptide-associated complex (NAC), consisting of nacA and nacB.

It is found in the cytoplasm. Its subcellular location is the nucleus. In terms of biological role, component of the nascent polypeptide-associated complex (NAC), a dynamic component of the ribosomal exit tunnel, protecting the emerging polypeptides from interaction with other cytoplasmic proteins to ensure appropriate nascent protein targeting. The NAC complex also promotes mitochondrial protein import by enhancing productive ribosome interactions with the outer mitochondrial membrane and blocks the inappropriate interaction of ribosomes translating non-secretory nascent polypeptides with translocation sites in the membrane of the endoplasmic reticulum. May also be involved in transcription regulation. This chain is Nascent polypeptide-associated complex subunit alpha (nacA), found in Dictyostelium discoideum (Social amoeba).